Here is a 346-residue protein sequence, read N- to C-terminus: Transposase for insertion sequence element IS1533 (346 aa).

Belongs to the transposase IS1111A/IS1328/IS1533 family.

Required for the transposition of the insertion element. In Leptospira borgpetersenii, this protein is Transposase for insertion sequence element IS1533 (tnhA).